Consider the following 253-residue polypeptide: Imidazole glycerol phosphate synthase subunit HisF (253 aa).

Residues D11 and D130 contribute to the active site.

This sequence belongs to the HisA/HisF family. In terms of assembly, heterodimer of HisH and HisF.

The protein resides in the cytoplasm. It catalyses the reaction 5-[(5-phospho-1-deoxy-D-ribulos-1-ylimino)methylamino]-1-(5-phospho-beta-D-ribosyl)imidazole-4-carboxamide + L-glutamine = D-erythro-1-(imidazol-4-yl)glycerol 3-phosphate + 5-amino-1-(5-phospho-beta-D-ribosyl)imidazole-4-carboxamide + L-glutamate + H(+). It participates in amino-acid biosynthesis; L-histidine biosynthesis; L-histidine from 5-phospho-alpha-D-ribose 1-diphosphate: step 5/9. In terms of biological role, IGPS catalyzes the conversion of PRFAR and glutamine to IGP, AICAR and glutamate. The HisF subunit catalyzes the cyclization activity that produces IGP and AICAR from PRFAR using the ammonia provided by the HisH subunit. The polypeptide is Imidazole glycerol phosphate synthase subunit HisF (Geobacter metallireducens (strain ATCC 53774 / DSM 7210 / GS-15)).